We begin with the raw amino-acid sequence, 157 residues long: MQIQMLLPLVQTLAQQVADQEHLDLVSVQWLTHQSPPILRVEVRHPENDTSLEDCERLSRALEMALDELPEFEFAYVLEVSSPGLSDYLSSDRDFDAFRGFPVRVTTTAPHRGKTLWEGNLIRRDEVNVYLNQRGRSLAIPRSLIASVQLYTPSSEP.

It belongs to the RimP family.

The protein resides in the cytoplasm. Its function is as follows. Required for maturation of 30S ribosomal subunits. The chain is Ribosome maturation factor RimP from Thermosynechococcus vestitus (strain NIES-2133 / IAM M-273 / BP-1).